The chain runs to 433 residues: DNA polymerase processivity factor (433 aa).

The disordered stretch occupies residues 274–433 (RGDPFDKNYV…VPNTKKQKCG (160 aa)). The segment covering 298-307 (SLSSLANAGG) has biased composition (low complexity). 2 stretches are compositionally biased toward gly residues: residues 325-336 (GLGGLGGGGGGG) and 344-359 (GGGG…GGGG). Positions 360-376 (GDHDHGLSSKEKYEQHK) are enriched in basic and acidic residues. Gly residues predominate over residues 385 to 398 (GGSGGGGGGGGGGL).

This sequence belongs to the herpesviridae polymerase accessory protein family. In terms of assembly, forms homodimers. Interacts with host SMARCB1. Interacts with host NCL/nucleolin; this interaction is important for the organization of proteins within viral replication compartments. Interacts with UL112/UL113; this interaction is necessary for efficient viral DNA replication. Interacts with UL84. Interacts with the uracil DNA glycosylase UL114. Interacts with the DNA polymerase catalytic subunit UL54. Interacts with host IRF3. Interacts with host RELA. Phosphorylated by UL97 on serine residues, phosphorylation seems important for UL44 nuclear entry but does not directly affect its role in replication. Post-translationally, sumoylated. Sumoylation on Lys-410 increases viral DNA replication.

The protein localises to the virion. Its subcellular location is the host nucleus. Its function is as follows. Accessory subunit of the DNA polymerase that plays an essential role in viral DNA replication and acts by increasing the processivity of polymerization. Forms dimers that binds to double-stranded DNA and UL54 specifically to stimulates long chain DNA synthesis efficiently. Plays an important role in maintaining the structure of viral replication compartments by interacting with host nucleolin/NUC. In addition, suppresses innate immune responses through effects on host IRF3 and NF-kappa-B. Mechanistically, interfere with the binding of IRF3 and the p65 NF-kappa-B subunit to the promoters of antiviral genes, thereby inhibiting the expression of these genes. This is DNA polymerase processivity factor (UL44) from Human cytomegalovirus (strain Merlin) (HHV-5).